The primary structure comprises 169 residues: Ribosome maturation factor RimP (169 aa).

This sequence belongs to the RimP family.

It localises to the cytoplasm. Required for maturation of 30S ribosomal subunits. The chain is Ribosome maturation factor RimP from Pseudomonas putida (strain ATCC 700007 / DSM 6899 / JCM 31910 / BCRC 17059 / LMG 24140 / F1).